A 209-amino-acid chain; its full sequence is Uracil phosphoribosyltransferase (209 aa).

5-phospho-alpha-D-ribose 1-diphosphate is bound by residues Arg79, Arg104, and 131 to 139 (DPMLATGGS). Residues Ile194 and 199–201 (GDA) contribute to the uracil site. Asp200 contributes to the 5-phospho-alpha-D-ribose 1-diphosphate binding site.

It belongs to the UPRTase family. Mg(2+) is required as a cofactor.

It carries out the reaction UMP + diphosphate = 5-phospho-alpha-D-ribose 1-diphosphate + uracil. Its pathway is pyrimidine metabolism; UMP biosynthesis via salvage pathway; UMP from uracil: step 1/1. Its activity is regulated as follows. Allosterically activated by GTP. In terms of biological role, catalyzes the conversion of uracil and 5-phospho-alpha-D-ribose 1-diphosphate (PRPP) to UMP and diphosphate. This Streptococcus equi subsp. zooepidemicus (strain MGCS10565) protein is Uracil phosphoribosyltransferase.